We begin with the raw amino-acid sequence, 155 residues long: Effector protein PevD1 (155 aa).

Residues 1–18 (MQFTLAAAAALFGASALA) form the signal peptide. The region spanning 33-148 (NMYENIDIAD…NPTTIVIDSL (116 aa)) is the AA1-like domain. 2 disulfides stabilise this stretch: C70–C84 and C125–C135.

As to quaternary structure, monomer. Interacts with Arabidopsis thaliana NRP.

Its subcellular location is the secreted. Its function is as follows. Effector protein. Elicits a hypersensitive response (HR) in tobacco plants (N.tabacum) and cotton (G.hirsutum). Boosts systemic acquired resistance (SAR) to tobacco mosaic virus (TMV) infection in N.tabacum and to V.dhaliae infection in primed cotton seedlings. The protein is Effector protein PevD1 of Verticillium dahliae (Verticillium wilt).